A 275-amino-acid chain; its full sequence is Transmembrane protein 45A (275 aa).

Transmembrane regions (helical) follow at residues 7–27 (HALP…KSIL), 51–71 (ILEG…EQFI), 100–120 (FFFG…SLPV), 150–170 (IFVH…AFLE), and 218–238 (ILFL…IVGM).

Belongs to the TMEM45 family.

The protein localises to the membrane. This Homo sapiens (Human) protein is Transmembrane protein 45A (TMEM45A).